The primary structure comprises 177 residues: NADH-quinone oxidoreductase subunit B (177 aa).

Cysteine 56, cysteine 57, cysteine 121, and cysteine 151 together coordinate [4Fe-4S] cluster.

It belongs to the complex I 20 kDa subunit family. In terms of assembly, NDH-1 is composed of 14 different subunits. Subunits NuoB, C, D, E, F, and G constitute the peripheral sector of the complex. Requires [4Fe-4S] cluster as cofactor.

It is found in the cell inner membrane. It catalyses the reaction a quinone + NADH + 5 H(+)(in) = a quinol + NAD(+) + 4 H(+)(out). Functionally, NDH-1 shuttles electrons from NADH, via FMN and iron-sulfur (Fe-S) centers, to quinones in the respiratory chain. Couples the redox reaction to proton translocation (for every two electrons transferred, four hydrogen ions are translocated across the cytoplasmic membrane), and thus conserves the redox energy in a proton gradient. In Ruegeria pomeroyi (strain ATCC 700808 / DSM 15171 / DSS-3) (Silicibacter pomeroyi), this protein is NADH-quinone oxidoreductase subunit B.